The following is a 221-amino-acid chain: UPF0319 protein CGSHiGG_02140 (221 aa).

Residues 1-21 (MKLRAVVLGLATLCTSTATFA) form the signal peptide.

The protein belongs to the UPF0319 family.

The polypeptide is UPF0319 protein CGSHiGG_02140 (Haemophilus influenzae (strain PittGG)).